The following is a 121-amino-acid chain: Small ribosomal subunit protein uS13 (121 aa).

The disordered stretch occupies residues 93–121 (KGLPMRGQRTRTNARTRKGPRRAAQALKK).

The protein belongs to the universal ribosomal protein uS13 family. In terms of assembly, part of the 30S ribosomal subunit. Forms a loose heterodimer with protein S19. Forms two bridges to the 50S subunit in the 70S ribosome.

Functionally, located at the top of the head of the 30S subunit, it contacts several helices of the 16S rRNA. In the 70S ribosome it contacts the 23S rRNA (bridge B1a) and protein L5 of the 50S subunit (bridge B1b), connecting the 2 subunits; these bridges are implicated in subunit movement. Contacts the tRNAs in the A and P-sites. This Burkholderia ambifaria (strain ATCC BAA-244 / DSM 16087 / CCUG 44356 / LMG 19182 / AMMD) (Burkholderia cepacia (strain AMMD)) protein is Small ribosomal subunit protein uS13.